Reading from the N-terminus, the 173-residue chain is 5-hydroxymethyl-dUMP N-hydrolase (173 aa).

A2 bears the N-acetylalanine mark. G16 lines the 5-hydroxymethyl-dUMP pocket. A Phosphoserine modification is found at S17. The 5-hydroxymethyl-dUMP site is built by I18, R19, G20, S87, G89, and E93. S87 carries the post-translational modification Phosphoserine. Phosphoserine is present on residues S112, S117, S127, and S158. A 5-hydroxymethyl-dUMP-binding site is contributed by S117.

This sequence belongs to the 2'-deoxynucleoside 5'-phosphate N-hydrolase 1 family. As to quaternary structure, monomer and homodimer.

It is found in the cytoplasm. The protein localises to the nucleus. It catalyses the reaction 5-hydroxymethyl-dUMP + H2O = 5-hydroxymethyluracil + 2-deoxy-D-ribose 5-phosphate. Part of a nucleotide salvage pathway that eliminates epigenetically modified 5-hydroxymethyl-dCMP (hmdCMP) in a two-step process entailing deamination to cytotoxic 5-hydroxymethyl-dUMP (hmdUMP), followed by its hydrolysis into 5-hydroxymethyluracil (hmU) and 2-deoxy-D-ribose 5-phosphate (deoxyribosephosphate). Catalyzes the second step in that pathway, the hydrolysis of the N-glycosidic bond in hmdUMP, degrading this cytotoxic nucleotide to avoid its genomic integration. In Mus musculus (Mouse), this protein is 5-hydroxymethyl-dUMP N-hydrolase.